Consider the following 532-residue polypeptide: Nitrogenase molybdenum-iron protein alpha chain (532 aa).

The [8Fe-7S] cluster site is built by Cys62, Cys88, and Cys153. [7Fe-Mo-9S-C-homocitryl] cluster contacts are provided by Cys271 and His489.

Belongs to the NifD/NifK/NifE/NifN family. In terms of assembly, tetramer of two alpha and two beta chains. Forms complex with the iron protein (nitrogenase component 2). It depends on [8Fe-7S] cluster as a cofactor. [7Fe-Mo-9S-C-homocitryl] cluster is required as a cofactor.

The catalysed reaction is N2 + 8 reduced [2Fe-2S]-[ferredoxin] + 16 ATP + 16 H2O = H2 + 8 oxidized [2Fe-2S]-[ferredoxin] + 2 NH4(+) + 16 ADP + 16 phosphate + 6 H(+). Functionally, this molybdenum-iron protein is part of the nitrogenase complex that catalyzes the key enzymatic reactions in nitrogen fixation. In Methanosarcina barkeri, this protein is Nitrogenase molybdenum-iron protein alpha chain (nifD2).